The following is a 326-amino-acid chain: MQITVREALRDAMQEEMIRDDKVFVMGEEVAEYQGAYKVTQGLLEQFGPKRVIDTPITEYGFAGLAVGAAFAGLRPIVEFMTFNFAMQAFDHIVNSAAKTHYMSGGQAKCPIVFRGPNGAASRVAAQHSQNYTACYSHVPGLKVVAPYSAEDHKGLMLTAIRDDNPVIFLENEILYGHSFDVPETIEPIPFGQAKILREGSSVTIVTFSIQVKLALDAANVLQNDNIDCEVIDLRTIKPLDTDTIIESVKKTNRLVIVEEGWFFAGVGASIASIVMKEAFDYLDAPIEIVSGKDVPLPFAVNLEKLALPSESDVIEAVKKVCYYSV.

Glutamate 59 is a thiamine diphosphate binding site.

In terms of assembly, heterodimer of an alpha and a beta chain. Requires thiamine diphosphate as cofactor.

It carries out the reaction N(6)-[(R)-lipoyl]-L-lysyl-[protein] + pyruvate + H(+) = N(6)-[(R)-S(8)-acetyldihydrolipoyl]-L-lysyl-[protein] + CO2. In terms of biological role, the pyruvate dehydrogenase complex catalyzes the overall conversion of pyruvate to acetyl-CoA and CO(2). It contains multiple copies of three enzymatic components: pyruvate dehydrogenase (E1), dihydrolipoamide acetyltransferase (E2) and lipoamide dehydrogenase (E3). In Rickettsia felis (strain ATCC VR-1525 / URRWXCal2) (Rickettsia azadi), this protein is Pyruvate dehydrogenase E1 component subunit beta (pdhB).